A 145-amino-acid polypeptide reads, in one-letter code: Large-conductance mechanosensitive channel (145 aa).

3 helical membrane-spanning segments follow: residues 14–34 (VMDLAVGVIIGGAFGGIVKSL), 38–58 (LIMPIVGAIFGGFDFSNYFLP), and 81–101 (GSFLTVLINFLILAWIIFLMV).

The protein belongs to the MscL family. In terms of assembly, homopentamer.

The protein localises to the cell inner membrane. Channel that opens in response to stretch forces in the membrane lipid bilayer. May participate in the regulation of osmotic pressure changes within the cell. The chain is Large-conductance mechanosensitive channel from Rhizobium leguminosarum bv. trifolii (strain WSM2304).